A 403-amino-acid chain; its full sequence is Phosphoglycerate kinase (403 aa).

Residues 24-26, arginine 39, 62-65, arginine 121, and arginine 161 each bind substrate; these read DLN and HLGR. Residues lysine 211, glycine 299, glutamate 330, and 359 to 362 each bind ATP; that span reads GGDS.

This sequence belongs to the phosphoglycerate kinase family. In terms of assembly, monomer.

Its subcellular location is the cytoplasm. The catalysed reaction is (2R)-3-phosphoglycerate + ATP = (2R)-3-phospho-glyceroyl phosphate + ADP. It functions in the pathway carbohydrate degradation; glycolysis; pyruvate from D-glyceraldehyde 3-phosphate: step 2/5. This is Phosphoglycerate kinase from Rhodococcus jostii (strain RHA1).